Reading from the N-terminus, the 90-residue chain is Molybdopterin synthase sulfur carrier subunit (90 aa).

Gly-90 is subject to 1-thioglycine; alternate. At Gly-90 the chain carries Glycyl adenylate; alternate.

Belongs to the MoaD family. MOCS2A subfamily. In terms of assembly, heterotetramer; composed of 2 small (Mocs2A) and 2 large (Mocs2B) subunits. C-terminal thiocarboxylation occurs in 2 steps, it is first acyl-adenylated (-COAMP) via the hesA/moeB/thiF part of MOCS3, then thiocarboxylated (-COSH) via the rhodanese domain of MOCS3.

The protein localises to the cytoplasm. Its pathway is cofactor biosynthesis; molybdopterin biosynthesis. Functionally, acts as a sulfur carrier required for molybdopterin biosynthesis. Component of the molybdopterin synthase complex that catalyzes the conversion of precursor Z into molybdopterin by mediating the incorporation of 2 sulfur atoms into precursor Z to generate a dithiolene group. In the complex, serves as sulfur donor by being thiocarboxylated (-COSH) at its C-terminus by MOCS3. After interaction with Mocs2B, the sulfur is then transferred to precursor Z to form molybdopterin. In Drosophila erecta (Fruit fly), this protein is Molybdopterin synthase sulfur carrier subunit.